The chain runs to 348 residues: D-erythrose-4-phosphate dehydrogenase (348 aa).

NAD(+) is bound by residues 12 to 13 (RI) and R81. Substrate contacts are provided by residues 154–156 (SCT), R200, 213–214 (TK), and R236. Catalysis depends on C155, which acts as the Nucleophile. Position 318 (N318) interacts with NAD(+).

This sequence belongs to the glyceraldehyde-3-phosphate dehydrogenase family. Epd subfamily. In terms of assembly, homotetramer.

It is found in the cytoplasm. The enzyme catalyses D-erythrose 4-phosphate + NAD(+) + H2O = 4-phospho-D-erythronate + NADH + 2 H(+). The protein operates within cofactor biosynthesis; pyridoxine 5'-phosphate biosynthesis; pyridoxine 5'-phosphate from D-erythrose 4-phosphate: step 1/5. Its function is as follows. Catalyzes the NAD-dependent conversion of D-erythrose 4-phosphate to 4-phosphoerythronate. In Salmonella gallinarum (strain 287/91 / NCTC 13346), this protein is D-erythrose-4-phosphate dehydrogenase.